Here is an 85-residue protein sequence, read N- to C-terminus: PLGGKRAAPDLDVRKCLPCGPGGKGRCFGPNICCAEELGCFVGTAEALRCQEENYLPSPCQSGQKACGSGGRCAVFGLCCSPDGC.

Glycine amide is present on glycine 3. 6 disulfide bridges follow: cysteine 16–cysteine 60, cysteine 19–cysteine 33, cysteine 27–cysteine 50, cysteine 34–cysteine 40, cysteine 67–cysteine 79, and cysteine 80–cysteine 85.

It belongs to the vasopressin/oxytocin family. In terms of assembly, interacts with oxytocin receptor (Ki=1.5 nM). Interacts with vasopressin V1aR/AVPR1A (Ki=37 nM), V1bR/AVPR1B (Ki=222 nM), and V2R/AVPR2 receptors (Ki=823 nM).

Functionally, neurophysin 1 specifically binds oxytocin. Oxytocin causes contraction of the smooth muscle of the uterus and of the mammary gland. Acts by binding to oxytocin receptor (OXTR). The protein is Oxytocin-neurophysin 1 (OXT) of Papio hamadryas (Hamadryas baboon).